The primary structure comprises 971 residues: Isoleucine--tRNA ligase (971 aa).

The short motif at 64–74 (PYANGHIHIGH) is the 'HIGH' region element. Glutamate 602 contributes to the L-isoleucyl-5'-AMP binding site. Residues 643-647 (KMSKS) carry the 'KMSKS' region motif. Residue lysine 646 participates in ATP binding.

This sequence belongs to the class-I aminoacyl-tRNA synthetase family. IleS type 1 subfamily. In terms of assembly, monomer.

The protein resides in the cytoplasm. The catalysed reaction is tRNA(Ile) + L-isoleucine + ATP = L-isoleucyl-tRNA(Ile) + AMP + diphosphate. Its function is as follows. Catalyzes the attachment of isoleucine to tRNA(Ile). As IleRS can inadvertently accommodate and process structurally similar amino acids such as valine, to avoid such errors it has two additional distinct tRNA(Ile)-dependent editing activities. One activity is designated as 'pretransfer' editing and involves the hydrolysis of activated Val-AMP. The other activity is designated 'posttransfer' editing and involves deacylation of mischarged Val-tRNA(Ile). The polypeptide is Isoleucine--tRNA ligase (Bartonella quintana (strain Toulouse) (Rochalimaea quintana)).